The chain runs to 961 residues: Leucine--tRNA ligase (961 aa).

Positions Pro-41–His-51 match the 'HIGH' region motif. The short motif at Lys-632–Ser-636 is the 'KMSKS' region element. Lys-635 is an ATP binding site.

It belongs to the class-I aminoacyl-tRNA synthetase family.

It localises to the cytoplasm. The enzyme catalyses tRNA(Leu) + L-leucine + ATP = L-leucyl-tRNA(Leu) + AMP + diphosphate. This is Leucine--tRNA ligase from Methanosarcina acetivorans (strain ATCC 35395 / DSM 2834 / JCM 12185 / C2A).